The following is a 21-amino-acid chain: Cupiennin-6a (21 aa).

The residue at position 21 (S21) is a Serine amide.

In terms of tissue distribution, expressed by the venom gland.

It is found in the secreted. This Cupiennius salei (American wandering spider) protein is Cupiennin-6a.